Here is a 262-residue protein sequence, read N- to C-terminus: MVIKTSLTVLILGVLIAEVFCAGHSQCNRRENPVNPFSYYETVNGKETLRMCPAAQIFNKTSCHCNAVEVVPGSGMNFRSGQQNFQWSSSGSSGGGMGASGMGANGMVASGIGASGIGTSGMGASNTNAMMNAFLGGSKAGSGNIATSGTSSGKFKVTLPFNPLILKWTKSSNGGWGAETGSSGGMNSQSSGSQSGSWGSSSGSWGGSSGSMGSSGNWLNDLQFMGNMRPQGINFPAPIMNIKVSGTGGSSQGVLRAARPHP.

The first 21 residues, 1–21 (MVIKTSLTVLILGVLIAEVFC), serve as a signal peptide directing secretion. A glycan (N-linked (GlcNAc...) asparagine) is linked at Asn59. The segment at 172–212 (SNGGWGAETGSSGGMNSQSSGSQSGSWGSSSGSWGGSSGSM) is disordered. Gly residues predominate over residues 174-184 (GGWGAETGSSG). The span at 185-203 (GMNSQSSGSQSGSWGSSSG) shows a compositional bias: low complexity.

Component of the acid-insoluble and acid-soluble organic matrix of calcified layers of the shell (at protein level).

The protein localises to the secreted. In Lottia gigantea (Giant owl limpet), this protein is Glycine and serine-rich protein 1.